The primary structure comprises 168 residues: Small ribosomal subunit protein uS9 (168 aa).

Residues Met-1 to Glu-29 show a composition bias toward low complexity. Residues Met-1 to Arg-36 form a disordered region.

This sequence belongs to the universal ribosomal protein uS9 family.

This chain is Small ribosomal subunit protein uS9, found in Paenarthrobacter aurescens (strain TC1).